A 336-amino-acid chain; its full sequence is Ribosomal RNA large subunit methyltransferase F (336 aa).

The protein belongs to the methyltransferase superfamily. METTL16/RlmF family.

The protein resides in the cytoplasm. The enzyme catalyses adenosine(1618) in 23S rRNA + S-adenosyl-L-methionine = N(6)-methyladenosine(1618) in 23S rRNA + S-adenosyl-L-homocysteine + H(+). Functionally, specifically methylates the adenine in position 1618 of 23S rRNA. This Serratia proteamaculans (strain 568) protein is Ribosomal RNA large subunit methyltransferase F.